Reading from the N-terminus, the 57-residue chain is Large ribosomal subunit protein uL30 (57 aa).

It belongs to the universal ribosomal protein uL30 family. Part of the 50S ribosomal subunit.

In Acholeplasma laidlawii (strain PG-8A), this protein is Large ribosomal subunit protein uL30.